Here is a 321-residue protein sequence, read N- to C-terminus: MRIVALAGGIGGARFLRGLLAAVGPQDEITVIGNTGDDIHLYGLKVCPDLDTVMYTLGGGIHEEQGWGRADETWSIKAEMKEYGVGPEWFGLGDRDFATHLVRSQMLTAGYSLSQVTEALCVRWNPGVRLLPMSDDRVETHVRITDEQGTRAVHFQEYWVRLHAAVDAEAIIPVGADTAKPAPGVLEAIAEADVILFPPSNPVVSIGTILAVPGIREAVAAAPAPVVGLSPIIGGAPVRGMADKVLAAVGVEATAEAVALNYGPDLIDGWLVDTADEHAVAAVEAAGIACRAVPLLMTDVEATAEMARTALALAEQVRHGS.

7,8-didemethyl-8-hydroxy-5-deazariboflavin is bound at residue Asp51.

The protein belongs to the CofD family. As to quaternary structure, homodimer. It depends on Mg(2+) as a cofactor.

It carries out the reaction enolpyruvoyl-2-diphospho-5'-guanosine + 7,8-didemethyl-8-hydroxy-5-deazariboflavin = dehydro coenzyme F420-0 + GMP + H(+). Its pathway is cofactor biosynthesis; coenzyme F420 biosynthesis. In terms of biological role, catalyzes the transfer of the phosphoenolpyruvate moiety from enoylpyruvoyl-2-diphospho-5'-guanosine (EPPG) to 7,8-didemethyl-8-hydroxy-5-deazariboflavin (FO) with the formation of dehydro coenzyme F420-0 and GMP. The protein is Phosphoenolpyruvate transferase of Kitasatospora aureofaciens (Streptomyces aureofaciens).